We begin with the raw amino-acid sequence, 234 residues long: Chromatin remodeling protein EBS (234 aa).

A BAH domain is found at 29-144 (KVVRAGDCVL…AATGAFTPDR (116 aa)). A PHD-type zinc finger spans residues 146–197 (AVYCKCEMPYNPDDLMVQCEGCKDWYHPACVGMTIEEAKKLDHFVCAECSSD).

Belongs to the SHL1/EBS protein family. As to quaternary structure, recognizes di- and trimethylated histone H3 at lysine 4 (H3K4me2 and H3K4me3). Interacts with HDA6. As to expression, expressed ubiquitously, with higher levels in floral buds.

The protein localises to the nucleus. Chromatin remodeling factor that binds to methylated histone (e.g. H3K4me2/3) to prevent their acetylation (e.g. H3K9K14Ac), likely by recruiting histone deacetylase (HDAC) complexes, and thus regulating the transcription of target genes. Negative regulator in developmental processes in a gibberellic acid- (GA-) dependent manner, such as germination, flowering induction, and flower organ specification, probably by modulating developmental gene expression. Involved in the chromatin-mediated repression of floral initiation and controls genes regulating flowering. Negatively regulates the expression of the floral integrator FT epigenetically, by preventing high levels of H3 acetylation, thus maintaining an inactive chromatin conformation at FT locus. The protein is Chromatin remodeling protein EBS of Arabidopsis thaliana (Mouse-ear cress).